Here is a 390-residue protein sequence, read N- to C-terminus: Homoserine O-succinyltransferase (390 aa).

The AB hydrolase-1 domain occupies N59–D369. S165 (nucleophile) is an active-site residue. R235 contacts substrate. Residues D330 and H363 contribute to the active site. D364 is a substrate binding site.

The protein belongs to the AB hydrolase superfamily. MetX family. Homodimer.

It is found in the cytoplasm. It catalyses the reaction L-homoserine + succinyl-CoA = O-succinyl-L-homoserine + CoA. It functions in the pathway amino-acid biosynthesis; L-methionine biosynthesis via de novo pathway; O-succinyl-L-homoserine from L-homoserine: step 1/1. In terms of biological role, transfers a succinyl group from succinyl-CoA to L-homoserine, forming succinyl-L-homoserine. This Cupriavidus pinatubonensis (strain JMP 134 / LMG 1197) (Cupriavidus necator (strain JMP 134)) protein is Homoserine O-succinyltransferase.